We begin with the raw amino-acid sequence, 148 residues long: 3-dehydroquinate dehydratase (148 aa).

Tyr-23 functions as the Proton acceptor in the catalytic mechanism. Residues Asn-75, His-81, and Asp-88 each contribute to the substrate site. His-101 functions as the Proton donor in the catalytic mechanism. Residues 102–103 (LS) and Arg-112 each bind substrate.

The protein belongs to the type-II 3-dehydroquinase family. Homododecamer.

It carries out the reaction 3-dehydroquinate = 3-dehydroshikimate + H2O. It functions in the pathway metabolic intermediate biosynthesis; chorismate biosynthesis; chorismate from D-erythrose 4-phosphate and phosphoenolpyruvate: step 3/7. In terms of biological role, catalyzes a trans-dehydration via an enolate intermediate. This chain is 3-dehydroquinate dehydratase, found in Halorhodospira halophila (strain DSM 244 / SL1) (Ectothiorhodospira halophila (strain DSM 244 / SL1)).